Consider the following 235-residue polypeptide: Sugar fermentation stimulation protein homolog (235 aa).

The protein belongs to the SfsA family.

The chain is Sugar fermentation stimulation protein homolog from Bartonella henselae (strain ATCC 49882 / DSM 28221 / CCUG 30454 / Houston 1) (Rochalimaea henselae).